We begin with the raw amino-acid sequence, 625 residues long: Glucose dehydrogenase [FAD, quinone] (625 aa).

The signal sequence occupies residues 1–42 (MATSPSSCDCLVGVPTGPTLASTCGGSAFMLFMGLLEVFIRS). 66 to 95 (DFIVIGGGSAGSVVASRLSEVPQWKVLLIE) is a binding site for FAD. His-544 (proton acceptor) is an active-site residue. Position 613 (Sec-613) is a non-standard amino acid, selenocysteine.

The protein belongs to the GMC oxidoreductase family. Requires FAD as cofactor.

Its subcellular location is the secreted. It carries out the reaction a quinone + D-glucose = D-glucono-1,5-lactone + a quinol. The protein is Glucose dehydrogenase [FAD, quinone] (Gld) of Drosophila pseudoobscura pseudoobscura (Fruit fly).